The chain runs to 599 residues: MTTQVPPSALLPLNPEQLARLQAATTDLTPTQLAWVSGYFWGVLNQQPVALAVTPAPAAEMPGITIISASQTGNARRVAEALRDDLLAAKLNVKLVNAGDYKFKQIASEKLLIVVTSTQGEGEPPEEAVALHKFLFSKKAPKLENTAFAVFSLGDSSYEFFCQSGKDFDSKLAELGGERLLDRVDSDVEYQAAASEWRARVVDALKSRAPVAAPSQSVATGAVNEIHTSPYSKDAPLVASLSVNQKITGRNSEKDVRHIEIDLGDSGLRYQPGDALGVWYQNDPALVKELVELLWLTGDEPVTVEGKTLPLNEALQWHFELTVNTANIVENYATLTRSETLLPLVGDKAKLQHYAATTLIVDMVRFSPAQLDAEALINLLRPLTPRLYSIASSQAEVENEVHVTVGVVRYDVEGRARAGGASSFLADRVEEEGEVRVFIEHNDNFRLPANLETPVIMIGPGTGIAPFRAFMQQRAADEAPGKNWLFFGNPHFTEDFLYQVEWQRYVKEGVLTRIDLAWSRDQKEKVYVQDKLREQGAELWRWINDGAHIYVCGDANRMAKDVEQALLEVIAEFGGMDTEAADEFLSELRVERRYQRDVY.

In terms of domain architecture, Flavodoxin-like spans 64–202 (ITIISASQTG…AASEWRARVV (139 aa)). Residues 70–75 (SQTGNA), 117–120 (STQG), and 153–162 (LGDSSYEFFC) each bind FMN. Residues 234–448 (DAPLVASLSV…IEHNDNFRLP (215 aa)) form the FAD-binding FR-type domain. FAD is bound by residues T322, A356, 386–389 (RLYS), 404–406 (TVG), Y410, and 419–422 (GGAS). NADP(+)-binding positions include 519 to 520 (SR), 525 to 529 (KVYVQ), and D561. FAD is bound at residue Y599.

It belongs to the NADPH-dependent sulphite reductase flavoprotein subunit CysJ family. In the N-terminal section; belongs to the flavodoxin family. This sequence in the C-terminal section; belongs to the flavoprotein pyridine nucleotide cytochrome reductase family. In terms of assembly, alpha(8)-beta(8). The alpha component is a flavoprotein, the beta component is a hemoprotein. It depends on FAD as a cofactor. FMN is required as a cofactor.

The catalysed reaction is hydrogen sulfide + 3 NADP(+) + 3 H2O = sulfite + 3 NADPH + 4 H(+). It functions in the pathway sulfur metabolism; hydrogen sulfide biosynthesis; hydrogen sulfide from sulfite (NADPH route): step 1/1. In terms of biological role, component of the sulfite reductase complex that catalyzes the 6-electron reduction of sulfite to sulfide. This is one of several activities required for the biosynthesis of L-cysteine from sulfate. The flavoprotein component catalyzes the electron flow from NADPH -&gt; FAD -&gt; FMN to the hemoprotein component. This Shigella flexneri serotype 5b (strain 8401) protein is Sulfite reductase [NADPH] flavoprotein alpha-component.